The following is a 340-amino-acid chain: MGGRVSVELPKRDPPPGVPTDEMLLNVDKMHDVIAPAKLLEYVHIGPLAKDKEDKVKKRYPEFRLVNTGPGGLSALLRQSYNGTAPNCCRTFNRTHYWKKDGKISDKYEEGAVLESCWPDVHDTGKCDVDLFDWCQGDTFDRNICHQWIGSAFNRSDRTVEGQQSLINLYNKMQTLCSKDASVPICESFLHHLRAHNTEDSKEMIDYILRQQSADFKQKYMRCSYPTRDKLEESLKYAEPRECWDPECSNANVNFLLTRNYNNLGLCNIVRCNTSVNNLQMDKTSSLRLSCGLSNSDRFSTVPVNRAKVVQHNIKHSFDLKLHLISLLSLLVIWILIVAI.

A lipid anchor (N-myristoyl glycine; by host) is attached at Gly-2. At 2-319 the chain is on the virion surface side; the sequence is GGRVSVELPK…VQHNIKHSFD (318 aa). Residues 320–340 traverse the membrane as a helical; Signal-anchor for type II membrane protein segment; that stretch reads LKLHLISLLSLLVIWILIVAI.

The protein belongs to the orthopoxvirus OPG086 family. Interacts with OPG143. Component of the entry fusion complex (EFC) composed of OPG053, OPG076, OPG086, OPG094, OPG095, OPG099, OPG107, OPG143, OPG104, OPG147 and OPG155. Except for OPG095 and OPG053, each of the EFC proteins is required for assembly or stability of the complex. Post-translationally, unglycosylated because produced in viral factories instead of the classic ER -Golgi route.

The protein resides in the virion membrane. Its function is as follows. Component of the entry fusion complex (EFC), which consists of 11 proteins. During cell infection, this complex mediates entry of the virion core into the host cytoplasm by a two-step mechanism consisting of lipid mixing of the viral and cellular membranes and subsequent pore formation. The chain is Entry-fusion complex protein OPG094 (OPG094) from Homo sapiens (Human).